We begin with the raw amino-acid sequence, 207 residues long: Putative 3-methyladenine DNA glycosylase (207 aa).

Belongs to the DNA glycosylase MPG family.

The protein is Putative 3-methyladenine DNA glycosylase of Listeria monocytogenes serotype 4a (strain HCC23).